A 918-amino-acid chain; its full sequence is DNA mismatch repair protein MutS (918 aa).

662–669 (GPNMAGKS) serves as a coordination point for ATP.

Belongs to the DNA mismatch repair MutS family.

In terms of biological role, this protein is involved in the repair of mismatches in DNA. It is possible that it carries out the mismatch recognition step. This protein has a weak ATPase activity. This is DNA mismatch repair protein MutS from Sorangium cellulosum (strain So ce56) (Polyangium cellulosum (strain So ce56)).